The primary structure comprises 222 residues: Eukaryotic translation initiation factor 3 subunit K (222 aa).

One can recognise a PCI domain in the interval 46-208 (YDLEANLAVL…KIKTKNITEK (163 aa)).

Belongs to the eIF-3 subunit K family. In terms of assembly, component of the eukaryotic translation initiation factor 3 (eIF-3) complex. The eIF-3 complex interacts with pix.

The protein resides in the cytoplasm. In terms of biological role, component of the eukaryotic translation initiation factor 3 (eIF-3) complex, which is involved in protein synthesis of a specialized repertoire of mRNAs and, together with other initiation factors, stimulates binding of mRNA and methionyl-tRNAi to the 40S ribosome. The eIF-3 complex specifically targets and initiates translation of a subset of mRNAs involved in cell proliferation. This is Eukaryotic translation initiation factor 3 subunit K from Drosophila willistoni (Fruit fly).